A 208-amino-acid chain; its full sequence is dITP/XTP pyrophosphatase (208 aa).

Residue 11-16 (SRNWKK) participates in substrate binding. Catalysis depends on Asp-76, which acts as the Proton acceptor. Residue Asp-76 coordinates Mg(2+). Substrate-binding positions include Ser-77, 158–161 (FGYD), Lys-184, and 189–190 (HR).

The protein belongs to the HAM1 NTPase family. Homodimer. Mg(2+) is required as a cofactor.

It catalyses the reaction XTP + H2O = XMP + diphosphate + H(+). It carries out the reaction dITP + H2O = dIMP + diphosphate + H(+). The catalysed reaction is ITP + H2O = IMP + diphosphate + H(+). In terms of biological role, pyrophosphatase that catalyzes the hydrolysis of nucleoside triphosphates to their monophosphate derivatives, with a high preference for the non-canonical purine nucleotides XTP (xanthosine triphosphate), dITP (deoxyinosine triphosphate) and ITP. Seems to function as a house-cleaning enzyme that removes non-canonical purine nucleotides from the nucleotide pool, thus preventing their incorporation into DNA/RNA and avoiding chromosomal lesions. The chain is dITP/XTP pyrophosphatase from Mycobacterium leprae (strain TN).